A 539-amino-acid chain; its full sequence is Phosphoenolpyruvate carboxykinase (ATP) (539 aa).

3 residues coordinate substrate: arginine 61, tyrosine 195, and lysine 201. Residues lysine 201, histidine 220, and 238-246 contribute to the ATP site; that span reads GLSGTGKTT. Mn(2+) contacts are provided by lysine 201 and histidine 220. Aspartate 259 is a Mn(2+) binding site. The ATP site is built by glutamate 287, arginine 325, and threonine 450. Arginine 325 is a substrate binding site.

This sequence belongs to the phosphoenolpyruvate carboxykinase (ATP) family. Requires Mn(2+) as cofactor.

The protein resides in the cytoplasm. The catalysed reaction is oxaloacetate + ATP = phosphoenolpyruvate + ADP + CO2. The protein operates within carbohydrate biosynthesis; gluconeogenesis. Its function is as follows. Involved in the gluconeogenesis. Catalyzes the conversion of oxaloacetate (OAA) to phosphoenolpyruvate (PEP) through direct phosphoryl transfer between the nucleoside triphosphate and OAA. In Methylorubrum populi (strain ATCC BAA-705 / NCIMB 13946 / BJ001) (Methylobacterium populi), this protein is Phosphoenolpyruvate carboxykinase (ATP).